Reading from the N-terminus, the 221-residue chain is PKHD-type hydroxylase Pro_1271 (221 aa).

The Fe2OG dioxygenase domain maps to 80-174; that stretch reads KVHGVMFSKS…RIVCVGWIQS (95 aa). Positions 98, 100, and 155 each coordinate Fe cation. 2-oxoglutarate is bound at residue Arg-165.

It depends on Fe(2+) as a cofactor. L-ascorbate is required as a cofactor.

The protein is PKHD-type hydroxylase Pro_1271 of Prochlorococcus marinus (strain SARG / CCMP1375 / SS120).